A 396-amino-acid polypeptide reads, in one-letter code: Elongation factor Tu (396 aa).

The region spanning Lys10–Val206 is the tr-type G domain. The segment at Gly19–Thr26 is G1. GTP is bound at residue Gly19 to Thr26. Thr26 is a binding site for Mg(2+). The tract at residues Gly60–Ala64 is G2. The G3 stretch occupies residues Asp81 to Gly84. Residues Asp81–His85 and Asn136–Asp139 contribute to the GTP site. The interval Asn136–Asp139 is G4. The interval Ser174–Leu176 is G5.

The protein belongs to the TRAFAC class translation factor GTPase superfamily. Classic translation factor GTPase family. EF-Tu/EF-1A subfamily. In terms of assembly, monomer.

It localises to the cytoplasm. It catalyses the reaction GTP + H2O = GDP + phosphate + H(+). GTP hydrolase that promotes the GTP-dependent binding of aminoacyl-tRNA to the A-site of ribosomes during protein biosynthesis. The polypeptide is Elongation factor Tu (Geotalea uraniireducens (strain Rf4) (Geobacter uraniireducens)).